A 164-amino-acid chain; its full sequence is Seripauperin-21 (164 aa).

Belongs to the SRP1/TIP1 family. Seripauperin subfamily.

This Saccharomyces cerevisiae (strain ATCC 204508 / S288c) (Baker's yeast) protein is Seripauperin-21 (PAU21).